We begin with the raw amino-acid sequence, 573 residues long: Urease subunit alpha 2 (573 aa).

The Urease domain maps to 136-573 (GAIDAHVHLI…LPMAQRYFLF (438 aa)). Ni(2+) is bound by residues H141, H143, and K224. K224 is subject to N6-carboxylysine. H226 serves as a coordination point for substrate. Ni(2+)-binding residues include H253 and H279. The active-site Proton donor is the H327. D367 provides a ligand contact to Ni(2+).

This sequence belongs to the metallo-dependent hydrolases superfamily. Urease alpha subunit family. As to quaternary structure, may form a heterohexamer of 3 UreC (alpha) and 3 UreAB (gamma/beta) subunits. May also form a heterotrimer of UreA (gamma), UreB (beta) and UreC (alpha) subunits. Three heterotrimers associate to form the active enzyme. Ni cation is required as a cofactor. In terms of processing, carboxylation allows a single lysine to coordinate two nickel ions.

Its subcellular location is the cytoplasm. The catalysed reaction is urea + 2 H2O + H(+) = hydrogencarbonate + 2 NH4(+). It participates in nitrogen metabolism; urea degradation; CO(2) and NH(3) from urea (urease route): step 1/1. The protein is Urease subunit alpha 2 of Streptomyces avermitilis (strain ATCC 31267 / DSM 46492 / JCM 5070 / NBRC 14893 / NCIMB 12804 / NRRL 8165 / MA-4680).